Reading from the N-terminus, the 299-residue chain is Plasmodesmata-located protein 5 (299 aa).

A signal peptide spans 1-25 (MIKTKTTSLLCFLLTAVILMNPSSS). Residues 26 to 264 (SPTDNYIYAV…NKDDNGVGKT (239 aa)) lie on the Extracellular side of the membrane. Gnk2-homologous domains follow at residues 29–135 (DNYI…NKSF) and 137–237 (GVQD…VGGS). 6 disulfides stabilise this stretch: C36/C113, C89/C98, C101/C126, C148/C215, C191/C200, and C203/C228. A helical transmembrane segment spans residues 265–285 (LAIIIGIVTLIILLVVFLAFV). The interval 265–285 (LAIIIGIVTLIILLVVFLAFV) is necessary and sufficient for plasmodesmal targeting. Residues 286 to 299 (GKCCRKLQDEKWCK) lie on the Cytoplasmic side of the membrane.

The protein belongs to the cysteine-rich repeat secretory protein family. Plasmodesmata-located proteins (PDLD) subfamily. As to quaternary structure, monomer. Interacts with PDLP1. (Microbial infection) Interacts with Grapevine fanleaf virus (GFLV) 2B-MP. Highly expressed in inflorescence nodes and rosette senescent leaves. Mostly expressed in cell wall junctions between leaf epidermal and mesophyl cells, and to a lesser extent at the cross walls between epidermal or cortex cells within the hypocotyl (at protein level). Low vascular expression in seedling and mature leaf, but high expression in senescing leaves (at protein level).

The protein localises to the cell membrane. It is found in the cell junction. Its subcellular location is the plasmodesma. Modulates cell-to-cell trafficking. Has a positive role in innate immunity. Required for systemic acquired resistance (SAR) which is mediated by the signaling molecules azelaic acid (AzA), glycerol-3-phosphate (G3P), and salicylic acid (SA). Negative regulator of plasmodesmata permeability triggered by SA during immune responses, through regulation of callose deposition. Delays the trafficking of Tobacco Mosaic Virus (TMV) movement protein (MP). Required for symplastic signal transport. The chain is Plasmodesmata-located protein 5 from Arabidopsis thaliana (Mouse-ear cress).